The following is a 131-amino-acid chain: Profilin-7 (131 aa).

Cys13 and Cys115 are joined by a disulfide. The Involved in PIP2 interaction signature appears at 81-97 (AVIRGKKGAGGITIKKT). At Thr111 the chain carries Phosphothreonine.

The protein belongs to the profilin family. In terms of assembly, occurs in many kinds of cells as a complex with monomeric actin in a 1:1 ratio. Post-translationally, phosphorylated by MAP kinases.

The protein resides in the cytoplasm. Its subcellular location is the cytoskeleton. In terms of biological role, binds to actin and affects the structure of the cytoskeleton. At high concentrations, profilin prevents the polymerization of actin, whereas it enhances it at low concentrations. This chain is Profilin-7, found in Phleum pratense (Common timothy).